Here is a 358-residue protein sequence, read N- to C-terminus: Probable butyrate kinase (358 aa).

It belongs to the acetokinase family.

Its subcellular location is the cytoplasm. It catalyses the reaction butanoate + ATP = butanoyl phosphate + ADP. This Oceanobacillus iheyensis (strain DSM 14371 / CIP 107618 / JCM 11309 / KCTC 3954 / HTE831) protein is Probable butyrate kinase.